A 367-amino-acid polypeptide reads, in one-letter code: Glutamate 5-kinase (367 aa).

An ATP-binding site is contributed by K10. Residues S50, D137, and N149 each coordinate substrate. ATP-binding positions include 169–170 (TD) and 211–217 (TGGMSTK). Residues 275-353 (AGEITVDEGA…QQIDAILGYE (79 aa)) enclose the PUA domain.

This sequence belongs to the glutamate 5-kinase family.

The protein resides in the cytoplasm. The catalysed reaction is L-glutamate + ATP = L-glutamyl 5-phosphate + ADP. It functions in the pathway amino-acid biosynthesis; L-proline biosynthesis; L-glutamate 5-semialdehyde from L-glutamate: step 1/2. Catalyzes the transfer of a phosphate group to glutamate to form L-glutamate 5-phosphate. This Salmonella arizonae (strain ATCC BAA-731 / CDC346-86 / RSK2980) protein is Glutamate 5-kinase.